The chain runs to 198 residues: Syndecan-4 (198 aa).

The signal sequence occupies residues 1–23 (MAPACLLAPLLLLLLGGFPLVPG). Over 24–145 (ESIRETEVID…QGSNIFERTE (122 aa)) the chain is Extracellular. 2 disordered regions span residues 42–76 (YFSG…PRPF) and 94–130 (AQPG…NKVS). O-linked (Xyl...) (glycosaminoglycan) serine glycans are attached at residues S44, S62, and S64. Over residues 48 to 71 (PDDEDAGGSDDFELSGSGDLDDTE) the composition is skewed to acidic residues. The segment covering 102–118 (SEPKELEENEVIPKRAP) has biased composition (basic and acidic residues). A helical transmembrane segment spans residues 146-170 (VLAALIVGGVVGILFAVFLILLLVY). The Cytoplasmic segment spans residues 171 to 198 (RMKKKDEGSYDLGKKPIYKKAPTNEFYA).

Belongs to the syndecan proteoglycan family. Homodimer. Interacts with CDCP1 and SDCBP. Interacts (via its cytoplasmic domain) with GIPC (via its PDZ domain). Interacts (via its cytoplasmic domain) with NUDT16L1. Interacts with DNM2; this interaction is markedly enhanced at focal ahesion site upon induction of focal adhesions and stress-fiber formation. Shedding is enhanced by a number of factors such as heparanase, thrombin or EGF. Also by stress and wound healing. PMA-mediated shedding is inhibited by TIMP3. In terms of processing, O-glycosylated; contains both chondroitin sulfate and heparan sulfate. Ser-44, Ser-62 and Ser-64 can all be modified by either chondroitin sulfate or heparan sulfate, and the protein exists in forms that contain only chondroitin sulfate, only heparan sulfate and both chondroitin sulfate and heparan sulfate. As to expression, ubiquitous. Highest levels in liver, kidney and lung.

The protein localises to the membrane. It is found in the secreted. Its function is as follows. Cell surface proteoglycan which regulates exosome biogenesis in concert with SDCBP and PDCD6IP. This Mus musculus (Mouse) protein is Syndecan-4.